The following is a 1151-amino-acid chain: Calcium-activated potassium channel subunit alpha-1 (1151 aa).

The interval 1–36 is disordered; it reads MSSNIHANHLSLDASSSSSSSSSSSSSSSSSSSVHE. At 1–59 the chain is on the extracellular side; that stretch reads MSSNIHANHLSLDASSSSSSSSSSSSSSSSSSSVHEPKMDALIIPVTMEVPCDSRGQRM. A compositionally biased stretch (low complexity) spans 15–33; that stretch reads SSSSSSSSSSSSSSSSSSS. The helical transmembrane segment at 60–80 threads the bilayer; sequence WWAFLASSMVTFFGGLFIILL. Topologically, residues 81-151 are cytoplasmic; it reads WRTLKYLWTV…MISAQTLTGR (71 aa). Residues cysteine 91, cysteine 92, and cysteine 94 are each lipidated (S-palmitoyl cysteine). A helical membrane pass occupies residues 152-172; that stretch reads VLVVLVFALSIGALVIYFIDS. Residues 173-187 are Extracellular-facing; it reads SNPIESCQNFYKDFT. A helical membrane pass occupies residues 188 to 208; sequence LQIDMAFNVFFLLYFGLRFIA. Topologically, residues 209–212 are cytoplasmic; it reads ANDK. Residues 213 to 233 traverse the membrane as a helical segment; it reads LWFWLEVNSVVDFFTVPPVFV. Residues 234–237 lie on the Extracellular side of the membrane; that stretch reads SVYL. Residues 238–258 form a helical; Voltage-sensor membrane-spanning segment; that stretch reads NRSWLGLRFLRALRLIQFSEI. At 259–273 the chain is on the cytoplasmic side; that stretch reads LQFLNILKTSNSIKL. The chain crosses the membrane as a helical span at residues 274-294; it reads VNLLSIFISTWLTAAGFIHLV. The Extracellular portion of the chain corresponds to 295–308; sequence ENSGDPWENFQNNQ. The pore-forming intramembrane region spans 309–331; it reads ALTYWECVYLLMVTMSTVGYGDV. Positions 325 to 328 match the Selectivity for potassium motif; sequence TVGY. At 332–340 the chain is on the extracellular side; sequence YAKTTLGRL. Residues 341 to 361 traverse the membrane as a helical segment; the sequence is FMVFFILGGLAMFASYVPEII. Over 362-1151 the chain is Cytoplasmic; the sequence is ELIGNRKKYG…KQKYVQEERL (790 aa). The RCK N-terminal 1 domain maps to 380–522; it reads RKHIVVCGHI…WNWKEGDDAI (143 aa). Residues glutamate 412, glutamine 435, and glutamate 437 each contribute to the Mg(2+) site. The segment S7 stretch occupies residues 529–549; the sequence is LGFIAQSCLAQGLSTMLANLF. Residues 586-606 are segment S8; sequence LSFPTVCELCFVKLKLLMIAI. A heme-binding motif region spans residues 650–654; sequence CKACH. A disordered region spans residues 674–702; the sequence is EQPSTLSPKKKQRNGGMRNSPNSSPKLMR. Residue threonine 678 is modified to Phosphothreonine. 3 positions are modified to phosphoserine: serine 680, serine 693, and serine 697. The interval 752–772 is segment S9; that stretch reads VLSGHVVVCIFGDVSSALIGL. Residues 754–898 form the RCK N-terminal 2 domain; sequence SGHVVVCIFG…MDRSSPDNSP (145 aa). Residue threonine 885 is modified to Phosphothreonine. Phosphoserine is present on residues serine 893 and serine 897. Residues 918–940 carry the Calcium bowl motif; the sequence is TELVNDTNVQFLDQDDDDDPDTE. Residues glutamine 927, aspartate 930, aspartate 933, and aspartate 935 each contribute to the Ca(2+) site. The segment at 947 to 967 is segment S10; the sequence is FACGTAFAVSVLDSLMSATYF. A compositionally biased stretch (low complexity) spans 1101-1126; the sequence is RASLSHSSHSSQSSSKKSSSVHSIPS. The disordered stretch occupies residues 1101-1151; it reads RASLSHSSHSSQSSSKKSSSVHSIPSTANRQNRPKSRESRDKQKYVQEERL. Positions 1135-1151 are enriched in basic and acidic residues; that stretch reads KSRESRDKQKYVQEERL. A phosphoserine mark is found at serine 1136 and serine 1139.

It belongs to the potassium channel family. Calcium-activated (TC 1.A.1.3) subfamily. KCa1.1/KCNMA1 sub-subfamily. Homotetramer; which constitutes the calcium-activated potassium channel. Interacts with beta subunits KCNMB1, KCNMB2, KCNMB3 and KCNMB4. Interacts with gamma subunits LRRC26, LRRC38, LRRC52 and LRRC55. Beta and gamma subunits are accessory, and modulate its activity. Interacts with RAB11B. In terms of processing, phosphorylated. Phosphorylation by kinases such as PKA and/or PKG. In smooth muscles, phosphorylation affects its activity. Palmitoylation by ZDHHC22 and ZDHHC23 within the intracellular linker between the S0 and S1 transmembrane domains regulates localization to the plasma membrane. Depalmitoylated by LYPLA1 and LYPLAL1, leading to retard exit from the trans-Golgi network.

It is found in the cell membrane. The enzyme catalyses K(+)(in) = K(+)(out). Ethanol and carbon monoxide-bound heme increase channel activation. Heme inhibits channel activation. Functionally, potassium channel activated by both membrane depolarization or increase in cytosolic Ca(2+) that mediates export of K(+). It is also activated by the concentration of cytosolic Mg(2+). Its activation dampens the excitatory events that elevate the cytosolic Ca(2+) concentration and/or depolarize the cell membrane. It therefore contributes to repolarization of the membrane potential. Plays a key role in controlling excitability in a number of systems, such as regulation of the contraction of smooth muscle, the tuning of hair cells in the cochlea, regulation of transmitter release, and innate immunity. In smooth muscles, its activation by high level of Ca(2+), caused by ryanodine receptors in the sarcoplasmic reticulum, regulates the membrane potential. In cochlea cells, its number and kinetic properties partly determine the characteristic frequency of each hair cell and thereby helps to establish a tonotopic map. Kinetics of KCNMA1 channels are determined by alternative splicing, phosphorylation status and its combination with modulating beta subunits. Highly sensitive to both iberiotoxin (IbTx) and charybdotoxin (CTX). This is Calcium-activated potassium channel subunit alpha-1 (KCNMA1) from Macaca mulatta (Rhesus macaque).